A 370-amino-acid polypeptide reads, in one-letter code: uncharacterized protein (370 aa).

Positions 1–27 (MSSAANEGCVYLFIVVLRLSSFSCVNS) are cleaved as a signal peptide. Asn-59, Asn-98, and Asn-126 each carry an N-linked (GlcNAc...) asparagine glycan. 2 disordered regions span residues 81–101 (SRSH…NTTA) and 123–167 (LSEN…CHQP). A compositionally biased stretch (acidic residues) spans 139-148 (HDDDDDDDLE). N-linked (GlcNAc...) asparagine glycosylation is found at Asn-171, Asn-221, Asn-230, and Asn-262.

This is an uncharacterized protein from Saccharomyces cerevisiae (strain ATCC 204508 / S288c) (Baker's yeast).